The following is a 104-amino-acid chain: MSSVPASAYLTLAIILFCIGLFGALTKRNTVIVLVCIELMLNAANLNLVAFSKLGLFPNVTGQIFSLFTMAVAAAEAAVGLAILIALYRNRTTVHVDEMDTLKG.

A run of 3 helical transmembrane segments spans residues 4 to 24 (VPAS…LFGA), 31 to 51 (VIVL…LVAF), and 67 to 87 (LFTM…LIAL).

This sequence belongs to the complex I subunit 4L family. In terms of assembly, NDH-1 is composed of 14 different subunits. Subunits NuoA, H, J, K, L, M, N constitute the membrane sector of the complex.

It is found in the cell membrane. It carries out the reaction a quinone + NADH + 5 H(+)(in) = a quinol + NAD(+) + 4 H(+)(out). NDH-1 shuttles electrons from NADH, via FMN and iron-sulfur (Fe-S) centers, to quinones in the respiratory chain. The immediate electron acceptor for the enzyme in this species is believed to be a menaquinone. Couples the redox reaction to proton translocation (for every two electrons transferred, four hydrogen ions are translocated across the cytoplasmic membrane), and thus conserves the redox energy in a proton gradient. This chain is NADH-quinone oxidoreductase subunit K, found in Bacillus cereus (strain Q1).